The following is a 593-amino-acid chain: Solute carrier family 13 member 2 (593 aa).

4 helical membrane-spanning segments follow: residues 11-31 (YRMY…PILV), 53-73 (ALPL…MGIM), 86-106 (TNVL…WNLH), and 121-141 (PALL…WISN). The span at 164–184 (SNVEEGSDNPTFELQEPSPQK) shows a compositional bias: polar residues. The segment at 164–204 (SNVEEGSDNPTFELQEPSPQKETSKVDEKDNGQAQPLPAVP) is disordered. Basic and acidic residues predominate over residues 185-194 (ETSKVDEKDN). A run of 8 helical transmembrane segments spans residues 221-241 (GMSL…LTGT), 270-290 (FAFP…QILF), 327-347 (PMSF…LLWF), 369-389 (VMVS…MVPS), 451-471 (LMPL…LLVA), 485-505 (LLLP…LYVM), 514-534 (LAFM…FGGL), and 543-563 (GIML…SWGV).

This sequence belongs to the SLC13A/DASS transporter (TC 2.A.47) family. NADC subfamily. Abundant in kidney and small intestine.

The protein resides in the apical cell membrane. The catalysed reaction is succinate(out) + 3 Na(+)(out) = succinate(in) + 3 Na(+)(in). It catalyses the reaction fumarate(out) + 3 Na(+)(out) = fumarate(in) + 3 Na(+)(in). It carries out the reaction 2-oxoglutarate(out) + 3 Na(+)(out) = 2-oxoglutarate(in) + 3 Na(+)(in). With respect to regulation, li(+) decreases succinate transport in the presence of Na(+), by competing at one of the three cation binding sites. Functionally, low-affinity sodium-dicarboxylate cotransporter, that mediates the entry of citric acid cycle intermediates, such as succinate, citrate, fumarate and alpha-ketoglutarate (2-oxoglutarate) into the small intestine and renal proximal tubule. Transports the dicarboxylate into the cell with a probable stoichiometry of 3 Na(+) for 1 divalent dicarboxylate, rendering the process electrogenic. Citrate is transported in protonated form as a divalent anion, rather than the trivalent form which is normally found in blood. Has a critical role in renal dicarboxylate transport. The chain is Solute carrier family 13 member 2 (SLC13A2) from Oryctolagus cuniculus (Rabbit).